A 132-amino-acid chain; its full sequence is Small ribosomal subunit protein uS8 (132 aa).

This sequence belongs to the universal ribosomal protein uS8 family. In terms of assembly, part of the 30S ribosomal subunit. Contacts proteins S5 and S12.

One of the primary rRNA binding proteins, it binds directly to 16S rRNA central domain where it helps coordinate assembly of the platform of the 30S subunit. The sequence is that of Small ribosomal subunit protein uS8 from Brevibacillus brevis (strain 47 / JCM 6285 / NBRC 100599).